Consider the following 59-residue polypeptide: Large ribosomal subunit protein uL30 (59 aa).

Belongs to the universal ribosomal protein uL30 family. In terms of assembly, part of the 50S ribosomal subunit.

The polypeptide is Large ribosomal subunit protein uL30 (Geotalea daltonii (strain DSM 22248 / JCM 15807 / FRC-32) (Geobacter daltonii)).